Consider the following 248-residue polypeptide: Anamorsin homolog (248 aa).

The N-terminal SAM-like domain stretch occupies residues 4 to 129 (FKGLQKTLYI…ETGSSARLSF (126 aa)). The tract at residues 130–161 (AKKDASALNVWKISGDDEELIDEEDLLDEEDK) is linker. Positions 172, 181, 184, and 186 each coordinate [2Fe-2S] cluster. The tract at residues 172 to 186 (CSTTGKRKACKNCSC) is fe-S binding site A. Residues cysteine 209, cysteine 212, cysteine 220, and cysteine 223 each coordinate [4Fe-4S] cluster. 2 consecutive short sequence motifs (cx2C motif) follow at residues 209 to 212 (CGNC) and 220 to 223 (CSTC). The interval 209–223 (CGNCYLGDAFRCSTC) is fe-S binding site B.

This sequence belongs to the anamorsin family. Monomer. It depends on [2Fe-2S] cluster as a cofactor. [4Fe-4S] cluster is required as a cofactor.

It is found in the cytoplasm. The protein localises to the mitochondrion intermembrane space. In terms of biological role, component of the cytosolic iron-sulfur (Fe-S) protein assembly (CIA) machinery. Required for the maturation of extramitochondrial Fe-S proteins. Part of an electron transfer chain functioning in an early step of cytosolic Fe-S biogenesis, facilitating the de novo assembly of a [4Fe-4S] cluster on the cytosolic Fe-S scaffold complex. Electrons are transferred from NADPH via a FAD- and FMN-containing diflavin oxidoreductase. Together with the diflavin oxidoreductase, also required for the assembly of the diferric tyrosyl radical cofactor of ribonucleotide reductase (RNR), probably by providing electrons for reduction during radical cofactor maturation in the catalytic small subunit. The sequence is that of Anamorsin homolog from Drosophila ananassae (Fruit fly).